The sequence spans 170 residues: Adenine phosphoribosyltransferase (170 aa).

This sequence belongs to the purine/pyrimidine phosphoribosyltransferase family. In terms of assembly, homodimer.

Its subcellular location is the cytoplasm. It carries out the reaction AMP + diphosphate = 5-phospho-alpha-D-ribose 1-diphosphate + adenine. It participates in purine metabolism; AMP biosynthesis via salvage pathway; AMP from adenine: step 1/1. In terms of biological role, catalyzes a salvage reaction resulting in the formation of AMP, that is energically less costly than de novo synthesis. The polypeptide is Adenine phosphoribosyltransferase (Geobacillus sp. (strain WCH70)).